The following is a 462-amino-acid chain: Glycine--tRNA ligase (462 aa).

2 residues coordinate substrate: arginine 98 and glutamate 174. ATP-binding positions include 206–208, 216–221, 290–291, and 334–337; these read RNE, FRTREF, EL, and GADR. Residue 221 to 225 coordinates substrate; it reads FEQME. Residue 330–334 coordinates substrate; sequence EPSLG.

Belongs to the class-II aminoacyl-tRNA synthetase family. In terms of assembly, homodimer.

The protein localises to the cytoplasm. It catalyses the reaction tRNA(Gly) + glycine + ATP = glycyl-tRNA(Gly) + AMP + diphosphate. Catalyzes the attachment of glycine to tRNA(Gly). The chain is Glycine--tRNA ligase from Lachnoclostridium phytofermentans (strain ATCC 700394 / DSM 18823 / ISDg) (Clostridium phytofermentans).